Here is a 241-residue protein sequence, read N- to C-terminus: ATP synthase subunit a (241 aa).

The next 5 helical transmembrane spans lie at 30–50 (GQVF…ISLG), 91–111 (FIGT…LIPW), 128–148 (INTT…AGLS), 193–213 (LVVG…VMFL), and 214–234 (GLFT…YYIG).

Belongs to the ATPase A chain family. In terms of assembly, F-type ATPases have 2 components, CF(1) - the catalytic core - and CF(0) - the membrane proton channel. CF(1) has five subunits: alpha(3), beta(3), gamma(1), delta(1), epsilon(1). CF(0) has four main subunits: a, b, b' and c.

It is found in the cellular thylakoid membrane. Key component of the proton channel; it plays a direct role in the translocation of protons across the membrane. This Prochlorococcus marinus (strain MIT 9301) protein is ATP synthase subunit a.